A 390-amino-acid chain; its full sequence is Putative nickel insertion protein (390 aa).

This sequence belongs to the LarC family.

This chain is Putative nickel insertion protein, found in Geotalea daltonii (strain DSM 22248 / JCM 15807 / FRC-32) (Geobacter daltonii).